Consider the following 257-residue polypeptide: Phosphonates import ATP-binding protein PhnC 1 (257 aa).

The 245-residue stretch at 2 to 246 folds into the ABC transporter domain; it reads IELKNVSKVY…VFKDIYGRPL (245 aa). Residue 35-42 participates in ATP binding; that stretch reads GLSGAGKS.

It belongs to the ABC transporter superfamily. Phosphonates importer (TC 3.A.1.9.1) family. In terms of assembly, the complex is composed of two ATP-binding proteins (PhnC), two transmembrane proteins (PhnE) and a solute-binding protein (PhnD).

The protein resides in the cell membrane. It carries out the reaction phosphonate(out) + ATP + H2O = phosphonate(in) + ADP + phosphate + H(+). In terms of biological role, part of the ABC transporter complex PhnCDE involved in phosphonates import. Responsible for energy coupling to the transport system. This Halalkalibacterium halodurans (strain ATCC BAA-125 / DSM 18197 / FERM 7344 / JCM 9153 / C-125) (Bacillus halodurans) protein is Phosphonates import ATP-binding protein PhnC 1.